Consider the following 276-residue polypeptide: Diaminopimelate epimerase (276 aa).

Substrate-binding residues include N13, Q46, and N66. C75 (proton donor) is an active-site residue. Substrate-binding positions include G76–N77, N159, N192, and E210–R211. The Proton acceptor role is filled by C219. G220–T221 serves as a coordination point for substrate.

This sequence belongs to the diaminopimelate epimerase family. Homodimer.

The protein resides in the cytoplasm. The enzyme catalyses (2S,6S)-2,6-diaminopimelate = meso-2,6-diaminopimelate. The protein operates within amino-acid biosynthesis; L-lysine biosynthesis via DAP pathway; DL-2,6-diaminopimelate from LL-2,6-diaminopimelate: step 1/1. Catalyzes the stereoinversion of LL-2,6-diaminopimelate (L,L-DAP) to meso-diaminopimelate (meso-DAP), a precursor of L-lysine and an essential component of the bacterial peptidoglycan. In Pseudomonas savastanoi pv. phaseolicola (strain 1448A / Race 6) (Pseudomonas syringae pv. phaseolicola (strain 1448A / Race 6)), this protein is Diaminopimelate epimerase.